The sequence spans 34 residues: Photosystem II reaction center protein M (34 aa).

Residues I5–L25 form a helical membrane-spanning segment.

Belongs to the PsbM family. As to quaternary structure, PSII is composed of 1 copy each of membrane proteins PsbA, PsbB, PsbC, PsbD, PsbE, PsbF, PsbH, PsbI, PsbJ, PsbK, PsbL, PsbM, PsbT, PsbX, PsbY, PsbZ, Psb30/Ycf12, at least 3 peripheral proteins of the oxygen-evolving complex and a large number of cofactors. It forms dimeric complexes.

The protein localises to the plastid. It is found in the chloroplast thylakoid membrane. Its function is as follows. One of the components of the core complex of photosystem II (PSII). PSII is a light-driven water:plastoquinone oxidoreductase that uses light energy to abstract electrons from H(2)O, generating O(2) and a proton gradient subsequently used for ATP formation. It consists of a core antenna complex that captures photons, and an electron transfer chain that converts photonic excitation into a charge separation. This subunit is found at the monomer-monomer interface. This is Photosystem II reaction center protein M from Huperzia lucidula (Shining clubmoss).